We begin with the raw amino-acid sequence, 450 residues long: Phosphoglucosamine mutase (450 aa).

Serine 104 (phosphoserine intermediate) is an active-site residue. Mg(2+) is bound by residues serine 104, aspartate 241, aspartate 243, and aspartate 245. Serine 104 carries the post-translational modification Phosphoserine.

This sequence belongs to the phosphohexose mutase family. Mg(2+) serves as cofactor. In terms of processing, activated by phosphorylation.

It carries out the reaction alpha-D-glucosamine 1-phosphate = D-glucosamine 6-phosphate. In terms of biological role, catalyzes the conversion of glucosamine-6-phosphate to glucosamine-1-phosphate. The polypeptide is Phosphoglucosamine mutase (Renibacterium salmoninarum (strain ATCC 33209 / DSM 20767 / JCM 11484 / NBRC 15589 / NCIMB 2235)).